The sequence spans 577 residues: Pyruvate decarboxylase (577 aa).

Substrate is bound by residues Asp-30 and His-116. The thiamine pyrophosphate binding stretch occupies residues 388 to 482; the sequence is TPGYGVNDFI…FLINNDGYTI (95 aa). Residues Asp-450, Asn-477, and Gly-479 each contribute to the Mg(2+) site. Glu-483 provides a ligand contact to substrate.

This sequence belongs to the TPP enzyme family. In terms of assembly, homotetramer. Requires a metal cation as cofactor. It depends on thiamine diphosphate as a cofactor.

The catalysed reaction is a 2-oxocarboxylate + H(+) = an aldehyde + CO2. This Aspergillus parasiticus protein is Pyruvate decarboxylase (pdcA).